Consider the following 502-residue polypeptide: D-erythritol 1-phosphate dehydrogenase (502 aa).

8–36 (DLFVIGGGINGAGVARDAAGRGLKVVLAE) contributes to the FAD binding site.

It belongs to the FAD-dependent glycerol-3-phosphate dehydrogenase family. FAD serves as cofactor.

The enzyme catalyses D-erythritol 1-phosphate + NADP(+) = D-erythrulose 1-phosphate + NADPH + H(+). It participates in carbohydrate metabolism; erythritol degradation. In terms of biological role, catalyzes the oxydation of D-erythritol 1-phosphate to D-erythrulose 1-phosphate. In Brucella abortus (strain 2308), this protein is D-erythritol 1-phosphate dehydrogenase.